Here is a 470-residue protein sequence, read N- to C-terminus: Glutamate--tRNA ligase (470 aa).

The short motif at 9–19 (PSPTGYLHVGG) is the 'HIGH' region element. The 'KMSKS' region signature appears at 236–240 (RLSKR). Lysine 239 lines the ATP pocket.

This sequence belongs to the class-I aminoacyl-tRNA synthetase family. Glutamate--tRNA ligase type 1 subfamily. In terms of assembly, monomer.

The protein resides in the cytoplasm. The enzyme catalyses tRNA(Glu) + L-glutamate + ATP = L-glutamyl-tRNA(Glu) + AMP + diphosphate. Catalyzes the attachment of glutamate to tRNA(Glu) in a two-step reaction: glutamate is first activated by ATP to form Glu-AMP and then transferred to the acceptor end of tRNA(Glu). The protein is Glutamate--tRNA ligase of Colwellia psychrerythraea (strain 34H / ATCC BAA-681) (Vibrio psychroerythus).